Reading from the N-terminus, the 504-residue chain is Patatin-like phospholipase domain-containing protein 2 (504 aa).

Topologically, residues 1-8 (MFPREKTW) are cytoplasmic. A helical membrane pass occupies residues 9–29 (NISFAGCGFLGVYYVGVASCL). Residues 10 to 179 (ISFAGCGFLG…SDNLPLYELK (170 aa)) form the PNPLA domain. The short motif at 14-19 (GCGFLG) is the GXGXXG element. Topologically, residues 30 to 42 (REHAPFLVANATH) are extracellular. The N-linked (GlcNAc...) asparagine glycan is linked to Asn-39. The helical transmembrane segment at 43-63 (IYGASAGALTATALVTGVCLG) threads the bilayer. The GXSXG signature appears at 45–49 (GASAG). Ser-47 functions as the Nucleophile in the catalytic mechanism. Residues 64–137 (EAGAKFIEVS…IISHFNSKDE (74 aa)) are Cytoplasmic-facing. Lys-92 participates in a covalent cross-link: Glycyl lysine isopeptide (Lys-Gly) (interchain with G-Cter in ubiquitin). Residues 138 to 158 (LIQANVCSGFIPVYCGLIPPS) traverse the membrane as a helical segment. At 159–329 (LQGVRYVDGG…TTLSNMLPVR (171 aa)) the chain is on the extracellular side. Catalysis depends on Asp-166, which acts as the Proton acceptor. The short motif at 166 to 168 (DGG) is the DGA/G element. A helical membrane pass occupies residues 330-350 (LATAMMVPYTLPLESALSFTI). Residues 351-504 (RLLEWLPDVP…ARPVIGALGL (154 aa)) lie on the Cytoplasmic side of the membrane. Phosphoserine; in vitro is present on Ser-372. At Ser-404 the chain carries Phosphoserine; by PKA and FAM20C. Ser-428 bears the Phosphoserine mark. A disordered region spans residues 463–492 (APADPAPAPADPASPQHQLAGPAPLLSTPA).

Interacts with ABHD5; this association stimulates PNPLA2 triglyceride hydrolase activity. Interacts with SERPINF1; this interaction stimulates the phospholipase A2 activity of PNPLA2. Despite a colocalization in lipid droplets, it probably does not interact with PLIN. Interacts with PLIN5; prevents interaction with ABHD5. Interacts with FAF2. In terms of processing, phosphorylation at Ser-404 by PKA is increased during fasting and moderate intensity exercise, and moderately increases lipolytic activity. Phosphorylation at Ser-404 is increased upon beta-adrenergic stimulation. Post-translationally, ubiquitinated by PEX2 in response to reactive oxygen species (ROS), leading to its degradation. Ubiquitination is stimulated by LDAH. Highest expression in adipose tissue. Also detected in heart, skeletal muscle, and portions of the gastrointestinal tract. Detected in normal retina and retinoblastoma cells. Detected in retinal pigment epithelium and, at lower intensity, in the inner segments of photoreceptors and in the ganglion cell layer of the neural retina (at protein level).

The protein resides in the lipid droplet. It localises to the cell membrane. Its subcellular location is the cytoplasm. The catalysed reaction is a triacylglycerol + H2O = a diacylglycerol + a fatty acid + H(+). It catalyses the reaction a triacylglycerol + H2O = a 1,2-diacylglycerol + a fatty acid + H(+). It carries out the reaction a triacylglycerol + H2O = a 1,3-diacylglycerol + a fatty acid + H(+). The enzyme catalyses a triacyl-sn-glycerol + H2O = a 1,3-diacyl-sn-glycerol + a fatty acid + H(+). The catalysed reaction is a triacyl-sn-glycerol + H2O = a 2,3-diacyl-sn-glycerol + a fatty acid + H(+). It catalyses the reaction a 1-acylglycerol + a 1,3-diacylglycerol = a triacylglycerol + glycerol. It carries out the reaction a 1-acylglycerol + a 1,2-diacylglycerol = a triacylglycerol + glycerol. The enzyme catalyses 2 a 1-acylglycerol = a 1,2-diacylglycerol + glycerol. The catalysed reaction is a triacylglycerol + all-trans-retinol = an all-trans-retinyl ester + a diacylglycerol. It catalyses the reaction 1,2-di-(9Z-octadecenoyl)-glycerol + (9Z)-octadecenoate + H(+) = 1,2,3-tri-(9Z-octadecenoyl)-glycerol + H2O. It carries out the reaction 1,2,3-tri-(9Z-octadecenoyl)-glycerol + H2O = 1,3-di-(9Z-octadecenoyl)-glycerol + (9Z)-octadecenoate + H(+). The enzyme catalyses 1-(9Z-octadecenoyl)-glycerol + 1,3-di-(9Z-octadecenoyl)-glycerol = 1,2,3-tri-(9Z-octadecenoyl)-glycerol + glycerol. The catalysed reaction is 1-(9Z-octadecenoyl)-glycerol + 1,2-di-(9Z-octadecenoyl)-glycerol = 1,2,3-tri-(9Z-octadecenoyl)-glycerol + glycerol. It catalyses the reaction 2 1-(9Z-octadecenoyl)-glycerol = 1,2-di-(9Z-octadecenoyl)-glycerol + glycerol. It carries out the reaction 1,2,3-tri-(9Z-octadecenoyl)-glycerol + all-trans-retinol = all-trans-retinyl 9Z-octadecenoate + di-(9Z)-octadecenoylglycerol. The enzyme catalyses 1,2,3-tri-(9Z)-hexadecenoylglycerol + H2O = 1,3-di-(9Z)-hexadecenoylglycerol + (9Z)-hexadecenoate + H(+). The catalysed reaction is 1,2,3-tri-(9Z,12Z)-octadecadienoylglycerol + H2O = 1,3-di-(9Z,12Z)-octadecadienoylglycerol + (9Z,12Z)-octadecadienoate + H(+). It catalyses the reaction 1,2,3-tri-(9Z,12Z,15Z)-octadecatrienoylglycerol + H2O = 1,3-di-(9Z,12Z,15Z)-octadecatrienoylglycerol + (9Z,12Z,15Z)-octadecatrienoate + H(+). It carries out the reaction 1,3-di-(9Z)-octadecenoyl-2-hexadecanoylglycerol + H2O = 1,3-di-(9Z-octadecenoyl)-glycerol + hexadecanoate + H(+). The enzyme catalyses 1,2-di-(9Z)-octadecenoyl-3-hexadecanoyl-sn-glycerol + H2O = 1-(9Z)-octadecenoyl-3-hexadecanoyl-sn-glycerol + (9Z)-octadecenoate + H(+). The catalysed reaction is 1-hexadecanoyl-2,3-di-(9Z)-octadecenoyl-sn-glycerol + H2O = 1-hexadecanoyl-3-(9Z)-octadecenoyl-sn-glycerol + (9Z)-octadecenoate + H(+). It catalyses the reaction 1,2,3-tri-(9Z-octadecenoyl)-glycerol + H2O = 2,3-di-(9Z)-octadecenoyl-sn-glycerol + (9Z)-octadecenoate + H(+). It carries out the reaction 1,2,3-tri-(9Z)-hexadecenoylglycerol + H2O = 2,3-di-(9Z)-hexadecenoyl-sn-glycerol + (9Z)-hexadecenoate + H(+). The enzyme catalyses 1,2,3-tri-(9Z,12Z)-octadecadienoylglycerol + H2O = 2,3-di-(9Z,12Z)-octadecadienoyl-sn-glycerol + (9Z,12Z)-octadecadienoate + H(+). The catalysed reaction is 1,2,3-tri-(9Z,12Z,15Z)-octadecatrienoylglycerol + H2O = 2,3-di-(9Z,12Z,15Z)-octadecatrienoyl-sn-glycerol + (9Z,12Z,15Z)-octadecatrienoate + H(+). It catalyses the reaction 1,3-di-(9Z)-octadecenoyl-2-hexadecanoylglycerol + H2O = 2-hexadecanoyl-3-(9Z)-octadecenoyl-sn-glycerol + (9Z)-octadecenoate + H(+). It carries out the reaction 1-hexadecanoyl-2,3-di-(9Z)-octadecenoyl-sn-glycerol + H2O = 2,3-di-(9Z)-octadecenoyl-sn-glycerol + hexadecanoate + H(+). The enzyme catalyses 1,2-di-(9Z)-octadecenoyl-3-hexadecanoyl-sn-glycerol + H2O = 2-(9Z-octadecenoyl)-3-hexadecanoyl-sn-glycerol + (9Z)-octadecenoate + H(+). The catalysed reaction is a 1,2-diacyl-sn-glycero-3-phosphocholine + H2O = a 1-acyl-sn-glycero-3-phosphocholine + a fatty acid + H(+). It catalyses the reaction 1,2,3-tri-(9Z-octadecenoyl)-glycerol + 9-hydroxy-octadecanoate = 9-(9Z-octadecenoyloxy)-octadecanoate + 2,3-di-(9Z)-octadecenoyl-sn-glycerol. It carries out the reaction 1-hexadecanoyl-2,3-di-(9Z)-octadecenoyl-sn-glycerol + 9-hydroxy-octadecanoate = 9-hexadecanoyloxy-octadecanoate + 2,3-di-(9Z)-octadecenoyl-sn-glycerol. The enzyme catalyses 1,2,3-tri-(10Z)-heptadecenoylglycerol + 9-hydroxy-octadecanoate = 2,3-di-(10Z-heptadecenoyl)-sn-glycerol + 9-(10Z-heptadecenoyloxy)-octadecanoate. The catalysed reaction is 1,2,3-tri-(9Z,12Z)-octadecadienoylglycerol + 9-hydroxy-octadecanoate = 2,3-di-(9Z,12Z)-octadecadienoyl-sn-glycerol + 9-(9Z,12Z-octadecadienoyloxy)-octadecanoate. It catalyses the reaction 1,2,3-tri-(9Z)-hexadecenoylglycerol + 9-hydroxy-octadecanoate = 2,3-di-(9Z)-hexadecenoyl-sn-glycerol + 9-(9Z-hexadecenoyloxy)-octadecanoate. It carries out the reaction 9-hydroxy-octadecanoate + 1,2-di-(9Z-octadecenoyl)-sn-glycerol = 9-(9Z-octadecenoyloxy)-octadecanoate + 2-(9Z-octadecenoyl)-glycerol. The enzyme catalyses 1-hexadecanoyl-2,3-di-(9Z)-octadecenoyl-sn-glycerol + 9-hydroxy-octadecanoate = 1-hexadecanoyl-3-(9Z)-octadecenoyl-sn-glycerol + 9-(9Z-octadecenoyloxy)-octadecanoate. Its pathway is glycerolipid metabolism; triacylglycerol degradation. The triglyceride lipase activity is inhibited by BEL ((E)-6-(bromomethylene)-3-(1-naphthalenyl)-2H-tetrahydropyran-2-one), a suicide substrate inhibitor. No differences in the acylglycerol transacylase was detected in the presence or absence of ATP. In terms of biological role, catalyzes the initial step in triglyceride hydrolysis in adipocyte and non-adipocyte lipid droplets. Exhibits a strong preference for the hydrolysis of long-chain fatty acid esters at the sn-2 position of the glycerol backbone and acts coordinately with LIPE/HLS and DGAT2 within the lipolytic cascade. Also possesses acylglycerol transacylase and phospholipase A2 activities. Transfers fatty acid from triglyceride to retinol, hydrolyzes retinylesters, and generates 1,3-diacylglycerol from triglycerides. Regulates adiposome size and may be involved in the degradation of adiposomes. Catalyzes the formation of an ester bond between hydroxy fatty acids and fatty acids derived from triglycerides or diglycerides to generate fatty acid esters of hydroxy fatty acids (FAHFAs) in adipocytes. Acts antagonistically with LDAH in regulation of cellular lipid stores. Inhibits LDAH-stimulated lipid droplet fusion. May play an important role in energy homeostasis. May play a role in the response of the organism to starvation, enhancing hydrolysis of triglycerides and providing free fatty acids to other tissues to be oxidized in situations of energy depletion. The chain is Patatin-like phospholipase domain-containing protein 2 from Homo sapiens (Human).